The primary structure comprises 353 residues: Photosystem II protein D1 (353 aa).

T2 is modified (N-acetylthreonine). A Phosphothreonine modification is found at T2. A run of 3 helical transmembrane segments spans residues 29-46 (YIGW…TATS), 118-133 (HFLL…EWEL), and 142-156 (WIAV…AAAA). H118 is a binding site for chlorophyll a. Y126 contacts pheophytin a. [CaMn4O5] cluster contacts are provided by D170 and E189. Residues 197–218 (FHMLGVAGVFGGSLFSAMHGSL) traverse the membrane as a helical segment. Position 198 (H198) interacts with chlorophyll a. A quinone is bound by residues H215 and 264–265 (SF). H215 contacts Fe cation. H272 is a Fe cation binding site. A helical membrane pass occupies residues 274–288 (FLAAWPVVGIWFTAL). Positions 332, 333, 342, and 344 each coordinate [CaMn4O5] cluster. A propeptide spanning residues 345–353 (AVEAPSTNG) is cleaved from the precursor.

The protein belongs to the reaction center PufL/M/PsbA/D family. PSII is composed of 1 copy each of membrane proteins PsbA, PsbB, PsbC, PsbD, PsbE, PsbF, PsbH, PsbI, PsbJ, PsbK, PsbL, PsbM, PsbT, PsbX, PsbY, PsbZ, Psb30/Ycf12, at least 3 peripheral proteins of the oxygen-evolving complex and a large number of cofactors. It forms dimeric complexes. It depends on The D1/D2 heterodimer binds P680, chlorophylls that are the primary electron donor of PSII, and subsequent electron acceptors. It shares a non-heme iron and each subunit binds pheophytin, quinone, additional chlorophylls, carotenoids and lipids. D1 provides most of the ligands for the Mn4-Ca-O5 cluster of the oxygen-evolving complex (OEC). There is also a Cl(-1) ion associated with D1 and D2, which is required for oxygen evolution. The PSII complex binds additional chlorophylls, carotenoids and specific lipids. as a cofactor. Tyr-161 forms a radical intermediate that is referred to as redox-active TyrZ, YZ or Y-Z. In terms of processing, C-terminally processed by CTPA; processing is essential to allow assembly of the oxygen-evolving complex and thus photosynthetic growth.

It localises to the plastid. It is found in the chloroplast thylakoid membrane. It carries out the reaction 2 a plastoquinone + 4 hnu + 2 H2O = 2 a plastoquinol + O2. In terms of biological role, photosystem II (PSII) is a light-driven water:plastoquinone oxidoreductase that uses light energy to abstract electrons from H(2)O, generating O(2) and a proton gradient subsequently used for ATP formation. It consists of a core antenna complex that captures photons, and an electron transfer chain that converts photonic excitation into a charge separation. The D1/D2 (PsbA/PsbD) reaction center heterodimer binds P680, the primary electron donor of PSII as well as several subsequent electron acceptors. The chain is Photosystem II protein D1 from Nandina domestica (Heavenly bamboo).